We begin with the raw amino-acid sequence, 356 residues long: 3-dehydroquinate synthase (356 aa).

Residues Gly106 to Asp110, Thr130 to Thr131, Lys143, and Lys152 each bind NAD(+). Positions 185, 248, and 265 each coordinate Zn(2+).

Belongs to the sugar phosphate cyclases superfamily. Dehydroquinate synthase family. The cofactor is NAD(+). Co(2+) serves as cofactor. It depends on Zn(2+) as a cofactor.

It localises to the cytoplasm. The enzyme catalyses 7-phospho-2-dehydro-3-deoxy-D-arabino-heptonate = 3-dehydroquinate + phosphate. It participates in metabolic intermediate biosynthesis; chorismate biosynthesis; chorismate from D-erythrose 4-phosphate and phosphoenolpyruvate: step 2/7. Catalyzes the conversion of 3-deoxy-D-arabino-heptulosonate 7-phosphate (DAHP) to dehydroquinate (DHQ). The chain is 3-dehydroquinate synthase from Caldanaerobacter subterraneus subsp. tengcongensis (strain DSM 15242 / JCM 11007 / NBRC 100824 / MB4) (Thermoanaerobacter tengcongensis).